We begin with the raw amino-acid sequence, 152 residues long: Clitocypin-5 (152 aa).

As to quaternary structure, homodimer.

Binds and inhibits cysteine proteinases. Inhibits most strongly papain and cathepsin L, more weakly bromelain and cathepsin B while it is completely ineffective against cathepsin H. This chain is Clitocypin-5 (clt5), found in Clitocybe nebularis (Clouded agaric).